A 107-amino-acid polypeptide reads, in one-letter code: Integration host factor subunit alpha (107 aa).

This sequence belongs to the bacterial histone-like protein family. In terms of assembly, heterodimer of an alpha and a beta chain.

In terms of biological role, this protein is one of the two subunits of integration host factor, a specific DNA-binding protein that functions in genetic recombination as well as in transcriptional and translational control. The chain is Integration host factor subunit alpha from Bartonella tribocorum (strain CIP 105476 / IBS 506).